Here is a 732-residue protein sequence, read N- to C-terminus: Small conductance calcium-activated potassium channel protein 3 (732 aa).

Basic and acidic residues predominate over residues 1 to 11; that stretch reads MDTSGHFHDSG. Disordered stretches follow at residues 1–82 and 103–162; these read MDTS…QQAP and HSSP…ASPL. A compositionally biased stretch (pro residues) spans 35–59; that stretch reads QPPPPSAPPAVPQQPPGPLLQPQPP. Positions 60–82 are enriched in low complexity; that stretch reads QLQQQQQQQQQQQQQQQQQQQAP. Over residues 113–133 the composition is skewed to polar residues; sequence NSANSTAILHPSSRQGSQLNL. Low complexity predominate over residues 139-148; that stretch reads GHSPSSTATS. Ser168 carries the post-translational modification Phosphoserine. Residues 241–257 show a composition bias toward polar residues; sequence THNHQHAGTTAGSTTFP. The interval 241 to 260 is disordered; that stretch reads THNHQHAGTTAGSTTFPKAN. A helical membrane pass occupies residues 289–309; it reads LIFGMFGIVVMVIETELSWGL. Residues 316–336 traverse the membrane as a helical segment; that stretch reads FSLALKCLISLSTIILLGLII. The chain crosses the membrane as a helical span at residues 367–387; sequence ISLEMLVCAIHPIPGEYKFFW. The helical transmembrane segment at 406-426 threads the bilayer; sequence IILSIPMFLRLYLIARVMLLH. A helical membrane pass occupies residues 455 to 475; the sequence is LMTICPGTVLLVFSISLWIIA. Residues 495–515 constitute an intramembrane region (pore-forming); sequence FLGAMWLISITFLSIGYGDMV. Residues 524–544 traverse the membrane as a helical segment; that stretch reads VCLLTGIMGAGCTALVVAVVA. Positions 562 to 638 are calmodulin-binding; the sequence is DTQLTKRIKN…LVDLSKMQNV (77 aa). A coiled-coil region spans residues 643-670; it reads ITELNDRSEDLEKQIGSLESKLEHLTAS. A disordered region spans residues 704-732; the sequence is GTSHAPPSDSPIGISSTSFPTPYTSSSSC. A compositionally biased stretch (low complexity) spans 718-732; it reads SSTSFPTPYTSSSSC.

The protein belongs to the potassium channel KCNN family. KCa2.3/KCNN3 subfamily. As to quaternary structure, homodimer. Heteromultimer with KCNN2 or KCNN1; this modulates plasma membrane expression and consequently the small conductance calcium-activated potassium channel activity. The complex is composed of 4 channel subunits each of which binds to a calmodulin subunit which regulates the channel activity through calcium-binding. Interacts with CALM1.

The protein localises to the cell membrane. It localises to the cytoplasm. It is found in the myofibril. Its subcellular location is the sarcomere. The protein resides in the z line. It carries out the reaction K(+)(in) = K(+)(out). With respect to regulation, inhibited by bee venom neurotoxin apamin. Functionally, small conductance calcium-activated potassium channel that mediates the voltage-independent transmembrane transfer of potassium across the cell membrane through a constitutive interaction with calmodulin which binds the intracellular calcium allowing its opening. The current is characterized by a voltage-independent activation, an intracellular calcium concentration increase-dependent activation and a single-channel conductance of 10 picosiemens. Also presents an inwardly rectifying current, thus reducing its already small outward conductance of potassium ions, which is particularly the case when the membrane potential displays positive values, above + 20 mV. Activation is followed by membrane hyperpolarization. Thought to regulate neuronal excitability by contributing to the slow component of synaptic afterhyperpolarization. In Rattus norvegicus (Rat), this protein is Small conductance calcium-activated potassium channel protein 3.